The chain runs to 185 residues: Nucleoside triphosphate pyrophosphatase (185 aa).

Catalysis depends on D70, which acts as the Proton acceptor.

Belongs to the Maf family. A divalent metal cation is required as a cofactor.

The protein resides in the cytoplasm. The catalysed reaction is a ribonucleoside 5'-triphosphate + H2O = a ribonucleoside 5'-phosphate + diphosphate + H(+). It carries out the reaction a 2'-deoxyribonucleoside 5'-triphosphate + H2O = a 2'-deoxyribonucleoside 5'-phosphate + diphosphate + H(+). Functionally, nucleoside triphosphate pyrophosphatase. May have a dual role in cell division arrest and in preventing the incorporation of modified nucleotides into cellular nucleic acids. The polypeptide is Nucleoside triphosphate pyrophosphatase (Nitratiruptor sp. (strain SB155-2)).